Here is a 373-residue protein sequence, read N- to C-terminus: Peptide chain release factor 2 (373 aa).

Q251 carries the post-translational modification N5-methylglutamine.

Belongs to the prokaryotic/mitochondrial release factor family. In terms of processing, methylated by PrmC. Methylation increases the termination efficiency of RF2.

It localises to the cytoplasm. Functionally, peptide chain release factor 2 directs the termination of translation in response to the peptide chain termination codons UGA and UAA. The chain is Peptide chain release factor 2 from Salinispora tropica (strain ATCC BAA-916 / DSM 44818 / JCM 13857 / NBRC 105044 / CNB-440).